Reading from the N-terminus, the 253-residue chain is MLTKRIIPCLDVKGGRVVKGVQFLELRDAGDPVEIAEIYDRQGADELTFLDITASSDARDIIIDVVRRTAERVFMPLTVGGGVRTVDDIRRLLNAGADKVSINTAAVHRPEFVKEAAERFGSQCTVVAIDARRVPGEDRWEVYTHGGRNATGIDAVEWAQRMEEYGSGEILLTSMDCDGTKDGYDLSLTRSVTDAVGIPVIASGGVGNLEHFYDGFTNGGASACLAASIFHYREYTIQEAKEYLKGKGVPVRL.

Catalysis depends on residues Asp-11 and Asp-130.

Belongs to the HisA/HisF family. In terms of assembly, heterodimer of HisH and HisF.

The protein resides in the cytoplasm. The catalysed reaction is 5-[(5-phospho-1-deoxy-D-ribulos-1-ylimino)methylamino]-1-(5-phospho-beta-D-ribosyl)imidazole-4-carboxamide + L-glutamine = D-erythro-1-(imidazol-4-yl)glycerol 3-phosphate + 5-amino-1-(5-phospho-beta-D-ribosyl)imidazole-4-carboxamide + L-glutamate + H(+). Its pathway is amino-acid biosynthesis; L-histidine biosynthesis; L-histidine from 5-phospho-alpha-D-ribose 1-diphosphate: step 5/9. Functionally, IGPS catalyzes the conversion of PRFAR and glutamine to IGP, AICAR and glutamate. The HisF subunit catalyzes the cyclization activity that produces IGP and AICAR from PRFAR using the ammonia provided by the HisH subunit. In Geotalea daltonii (strain DSM 22248 / JCM 15807 / FRC-32) (Geobacter daltonii), this protein is Imidazole glycerol phosphate synthase subunit HisF.